The following is a 132-amino-acid chain: Small ribosomal subunit protein uS8 (132 aa).

The protein belongs to the universal ribosomal protein uS8 family. Part of the 30S ribosomal subunit. Contacts proteins S5 and S12.

One of the primary rRNA binding proteins, it binds directly to 16S rRNA central domain where it helps coordinate assembly of the platform of the 30S subunit. The polypeptide is Small ribosomal subunit protein uS8 (Geobacter sp. (strain M21)).